Reading from the N-terminus, the 264-residue chain is Thymidylate synthase (264 aa).

Arg-21 contributes to the dUMP binding site. His-51 serves as a coordination point for (6R)-5,10-methylene-5,6,7,8-tetrahydrofolate. 126-127 (RR) serves as a coordination point for dUMP. Catalysis depends on Cys-146, which acts as the Nucleophile. Residues 166–169 (RSCD), Asn-177, and 207–209 (HLY) each bind dUMP. Asp-169 is a binding site for (6R)-5,10-methylene-5,6,7,8-tetrahydrofolate. (6R)-5,10-methylene-5,6,7,8-tetrahydrofolate is bound at residue Ala-263.

This sequence belongs to the thymidylate synthase family. Bacterial-type ThyA subfamily. As to quaternary structure, homodimer.

The protein localises to the cytoplasm. It carries out the reaction dUMP + (6R)-5,10-methylene-5,6,7,8-tetrahydrofolate = 7,8-dihydrofolate + dTMP. It functions in the pathway pyrimidine metabolism; dTTP biosynthesis. In terms of biological role, catalyzes the reductive methylation of 2'-deoxyuridine-5'-monophosphate (dUMP) to 2'-deoxythymidine-5'-monophosphate (dTMP) while utilizing 5,10-methylenetetrahydrofolate (mTHF) as the methyl donor and reductant in the reaction, yielding dihydrofolate (DHF) as a by-product. This enzymatic reaction provides an intracellular de novo source of dTMP, an essential precursor for DNA biosynthesis. This Aeromonas hydrophila subsp. hydrophila (strain ATCC 7966 / DSM 30187 / BCRC 13018 / CCUG 14551 / JCM 1027 / KCTC 2358 / NCIMB 9240 / NCTC 8049) protein is Thymidylate synthase.